Here is a 213-residue protein sequence, read N- to C-terminus: ATP phosphoribosyltransferase (213 aa).

The protein belongs to the ATP phosphoribosyltransferase family. Short subfamily. Heteromultimer composed of HisG and HisZ subunits.

The protein localises to the cytoplasm. It carries out the reaction 1-(5-phospho-beta-D-ribosyl)-ATP + diphosphate = 5-phospho-alpha-D-ribose 1-diphosphate + ATP. Its pathway is amino-acid biosynthesis; L-histidine biosynthesis; L-histidine from 5-phospho-alpha-D-ribose 1-diphosphate: step 1/9. In terms of biological role, catalyzes the condensation of ATP and 5-phosphoribose 1-diphosphate to form N'-(5'-phosphoribosyl)-ATP (PR-ATP). Has a crucial role in the pathway because the rate of histidine biosynthesis seems to be controlled primarily by regulation of HisG enzymatic activity. This chain is ATP phosphoribosyltransferase (hisG), found in Bacillus subtilis (strain 168).